An 87-amino-acid chain; its full sequence is Putative RNase MJ1548 (87 aa).

Catalysis depends on residues R65 and H70. The short motif at 65–72 (RNAIVHKY) is the RX(4)HXY motif element. At Y72 the chain carries O-di-AMP-tyrosine.

Belongs to the HepT RNase toxin family. As to quaternary structure, homodimer, probably forms a complex with cognate antitoxin MJ1547. Modified by cognate antitoxin MJ1547; probably at least 2 successive AMPylation events occur on Tyr-72.

Functionally, probable toxic component of a putative type VII toxin-antitoxin (TA) system, probably an RNase. Probably neutralized by cognate antitoxin MJ1547. Neutralization may be due to AMPylation by antitoxin MJ1547. In Methanocaldococcus jannaschii (strain ATCC 43067 / DSM 2661 / JAL-1 / JCM 10045 / NBRC 100440) (Methanococcus jannaschii), this protein is Putative RNase MJ1548.